The following is a 492-amino-acid chain: Thyroid hormone receptor alpha (492 aa).

A disordered region spans residues 1 to 33 (MEQKPSKVECGSDPEENSARSPDGKRKRKNGQC). The modulating stretch occupies residues 1–52 (MEQKPSKVECGSDPEENSARSPDGKRKRKNGQCPLKSSMSGYIPSYLDKDEQ). Cysteine 53, cysteine 56, cysteine 70, cysteine 73, cysteine 91, cysteine 97, cysteine 107, and cysteine 110 together coordinate Zn(2+). 2 NR C4-type zinc fingers span residues 53–73 (CVVC…CEGC) and 91–115 (CKYD…FKKC). Residues 53–127 (CVVCGDKATG…VGMAMDLVLD (75 aa)) constitute a DNA-binding region (nuclear receptor). The NR LBD domain maps to 163 to 407 (EEWDLIHVAT…EGQQLLGMHV (245 aa)). Residues arginine 228 and serine 277 each coordinate 3,3',5-triiodo-L-thyronine. Positions 457–492 (AVCGEDDSSEASSLSSSSSDEDTEVFEDLAGKAASP) are disordered.

It belongs to the nuclear hormone receptor family. NR1 subfamily. In terms of assembly, binds DNA as a dimer; homodimer and heterodimer with RXRB. Interacts with NCOA3 and NCOA6 coactivators, leading to a strong increase of transcription of target genes. Probably interacts with SFPQ. Interacts with C1D. Interacts with AKAP13. Interacts with TP53INP2. Interacts with PER2. Isoform alpha-2 and isoform alpha-1 interact with TACC1, but the interaction with alpha-1 is weaker. The interaction with isoform alpha-1, but not alpha-2, is decreased in the presence of thyroid hormone T3.

The protein resides in the nucleus. Its subcellular location is the cytoplasm. Nuclear hormone receptor that can act as a repressor or activator of transcription. High affinity receptor for thyroid hormones, including triiodothyronine and thyroxine. This is Thyroid hormone receptor alpha (Thra) from Rattus norvegicus (Rat).